We begin with the raw amino-acid sequence, 184 residues long: Adenylate kinase 2 (184 aa).

ATP is bound at residue 10 to 15; the sequence is GSGKST. The tract at residues 30–59 is NMP; that stretch reads STGEILREAISHLSELGRHAQPYMIKGELV. AMP is bound by residues threonine 31, arginine 36, 57-59, 85-88, and glutamine 92; these read ELV and GYPR. The interval 126 to 132 is LID; sequence GRSLPDD. Arginine 127 lines the ATP pocket. Residue arginine 140 coordinates AMP. Glutamine 168 is an ATP binding site.

This sequence belongs to the adenylate kinase family. As to quaternary structure, monomer.

It is found in the cytoplasm. The enzyme catalyses AMP + ATP = 2 ADP. It participates in purine metabolism; AMP biosynthesis via salvage pathway; AMP from ADP: step 1/1. Catalyzes the reversible transfer of the terminal phosphate group between ATP and AMP. Plays an important role in cellular energy homeostasis and in adenine nucleotide metabolism. This is Adenylate kinase 2 from Nostoc sp. (strain PCC 7120 / SAG 25.82 / UTEX 2576).